The following is a 2179-amino-acid chain: Axotactin (2179 aa).

The first 18 residues, 1–18 (MAFPYIWALLPLICSASG), serve as a signal peptide directing secretion. Topologically, residues 19–1816 (LSLPNMTSTD…DENKQEDSTQ (1798 aa)) are extracellular. N-linked (GlcNAc...) asparagine glycosylation is found at Asn-23 and Asn-52. Residues 59–107 (GGLAGSSTGGQSLPDTGGGNSAGGSPAGGSSGTGGGGSNSGISGNNSAM) are disordered. The segment covering 74–97 (TGGGNSAGGSPAGGSSGTGGGGSN) has biased composition (gly residues). N-linked (GlcNAc...) asparagine glycosylation is present at Asn-103. Positions 119-170 (CAGPGDPGPCKQYIYKWRYEPTTNECTNFIWGGCEGNPQNRFGTEAECLFHC) constitute a BPTI/Kunitz inhibitor domain. 3 disulfide bridges follow: Cys-119–Cys-170, Cys-128–Cys-152, and Cys-144–Cys-166. Positions 201–220 (YTQSPAQSPDGMGGAEGGDG) are disordered. Over residues 211 to 220 (GMGGAEGGDG) the composition is skewed to gly residues. Residues 242 to 438 (KTFIFAKNNT…TKHENVNEGC (197 aa)) enclose the Laminin G-like 1 domain. Asn-249 carries an N-linked (GlcNAc...) asparagine glycan. 4 disulfide bridges follow: Cys-405-Cys-438, Cys-442-Cys-455, Cys-449-Cys-464, and Cys-466-Cys-476. The EGF-like 1 domain occupies 439 to 477 (SDMCESRHNLCFVGSRCINHYGGISCDCFGTHYEGEHCD). Laminin G-like domains follow at residues 481-664 (ATII…AEFV) and 660-839 (EAEF…LDNC). 3 N-linked (GlcNAc...) asparagine glycosylation sites follow: Asn-542, Asn-571, and Asn-741. 4 disulfides stabilise this stretch: Cys-808/Cys-839, Cys-845/Cys-857, Cys-851/Cys-866, and Cys-868/Cys-878. One can recognise an EGF-like 2 domain in the interval 841–879 (YIDPCKRPNTCEHGGKCFVKDDRVTCDCKHTGYIGKNCH). 4 N-linked (GlcNAc...) asparagine glycosylation sites follow: Asn-925, Asn-1000, Asn-1019, and Asn-1026. The 173-residue stretch at 1087–1259 (YVVTFTTSQS…VHLSEIIKDC (173 aa)) folds into the Laminin G-like 4 domain. Cystine bridges form between Cys-1231–Cys-1259, Cys-1263–Cys-1274, Cys-1268–Cys-1283, and Cys-1285–Cys-1296. Residues 1260–1297 (KPSCVPSPCRNGAQCKELWSSFKCVCNNPWAHIGEFCE) enclose the EGF-like 3 domain. Residues 1316–1526 (RNYLSVGATP…PTQEGVLPNC (211 aa)) enclose the Laminin G-like 5 domain. N-linked (GlcNAc...) asparagine glycosylation is present at Asn-1393. 4 disulfides stabilise this stretch: Cys-1494-Cys-1526, Cys-1530-Cys-1541, Cys-1535-Cys-1552, and Cys-1554-Cys-1564. Residues 1527-1565 (QIKCDAEPCKNGGTCQEHFAEQLSTCDCEHTSFLGEFCS) form the EGF-like 4 domain. In terms of domain architecture, Laminin G-like 6 spans 1569 to 1765 (GADFSGESTL…NPQGVRSAQC (197 aa)). Residues Asn-1667, Asn-1707, Asn-1751, and Asn-1782 are each glycosylated (N-linked (GlcNAc...) asparagine). A disulfide bridge connects residues Cys-1722 and Cys-1765. Residues 1817 to 1837 (VVFLTLTSVFVIIVICCLLEV) form a helical membrane-spanning segment. Topologically, residues 1838–2179 (YRSHLAYKKR…TSIDSILSLD (342 aa)) are cytoplasmic. 2 disordered regions span residues 1891-2141 (YTYK…PTLF) and 2156-2179 (SYLG…LSLD). Over residues 1916–1930 (GSATPSQPGTPTALS) the composition is skewed to polar residues. Residues 1940–1949 (EEEEEEEDEA) are compositionally biased toward acidic residues. The span at 1954 to 1966 (AAEKSGENEEPPA) shows a compositional bias: basic and acidic residues. Polar residues-rich tracts occupy residues 1969–1981 (TTAS…QAQP) and 2010–2025 (EPSS…QLAQ). Positions 2064-2079 (PQEHKSRHKATDDTEA) are enriched in basic and acidic residues. Residues 2082–2091 (QQQQQQQQQQ) are compositionally biased toward low complexity. Composition is skewed to polar residues over residues 2092 to 2105 (SFDV…SSLP) and 2165 to 2179 (PRSN…LSLD).

The protein resides in the cell projection. Its subcellular location is the axon. The protein localises to the membrane. In terms of biological role, may have serine protease inhibitor activity. Might play a role in the glial-neuronal signaling pathway that is important in establishing the electrical properties of axonal membranes. The sequence is that of Axotactin from Drosophila melanogaster (Fruit fly).